The chain runs to 324 residues: tRNA N6-adenosine threonylcarbamoyltransferase (324 aa).

Residues His107, His111, and Tyr128 each coordinate Fe cation. Residues 128–132 (YVSGG), Asp160, Gly173, Glu177, and Asn256 each bind substrate. Asp284 lines the Fe cation pocket.

This sequence belongs to the KAE1 / TsaD family. As to quaternary structure, monomer. Component of the KEOPS complex that consists of Kae1, Bud32, Cgi121 and Pcc1; the whole complex dimerizes. It depends on Fe(2+) as a cofactor.

The protein localises to the cytoplasm. It catalyses the reaction L-threonylcarbamoyladenylate + adenosine(37) in tRNA = N(6)-L-threonylcarbamoyladenosine(37) in tRNA + AMP + H(+). Its function is as follows. Required for the formation of a threonylcarbamoyl group on adenosine at position 37 (t(6)A37) in tRNAs that read codons beginning with adenine. Is a component of the KEOPS complex that is probably involved in the transfer of the threonylcarbamoyl moiety of threonylcarbamoyl-AMP (TC-AMP) to the N6 group of A37. Kae1 likely plays a direct catalytic role in this reaction, but requires other protein(s) of the complex to fulfill this activity. The sequence is that of tRNA N6-adenosine threonylcarbamoyltransferase from Methanothrix thermoacetophila (strain DSM 6194 / JCM 14653 / NBRC 101360 / PT) (Methanosaeta thermophila).